Reading from the N-terminus, the 148-residue chain is UPF0756 membrane protein NMA2160 (148 aa).

4 consecutive transmembrane segments (helical) span residues leucine 13–methionine 35, histidine 50–glycine 70, phenylalanine 80–glycine 100, and valine 121–leucine 141.

It belongs to the UPF0756 family.

The protein localises to the cell membrane. The chain is UPF0756 membrane protein NMA2160 from Neisseria meningitidis serogroup A / serotype 4A (strain DSM 15465 / Z2491).